Consider the following 220-residue polypeptide: GTP-binding nuclear protein GSP2/CNR2 (220 aa).

S2 carries the N-acetylserine modification. A Phosphoserine modification is found at S2. The 165-residue stretch at 10–174 folds into the Small GTPase Ran-type domain; sequence EVPTFKLVLV…LWLARKLAGN (165 aa). Position 21–28 (21–28) interacts with GTP; the sequence is DGGTGKTT. A switch-I region spans residues 40–48; it reads KKYIATIGV. Residues G71, 125-128, and 153-155 each bind GTP; these read NKVD and SAK. Positions 71 to 87 are switch-II; it reads GQEKFGGLRDGYYINAQ.

It belongs to the small GTPase superfamily. Ran family. As to quaternary structure, found in a nuclear export complex with RanGTP, exportin and pre-miRNA.

It localises to the nucleus. In terms of biological role, GTP-binding protein involved in nucleocytoplasmic transport. Required for the import of protein into the nucleus and also for RNA export. Not essential for cell viability. The protein is GTP-binding nuclear protein GSP2/CNR2 (GSP2) of Saccharomyces cerevisiae (strain ATCC 204508 / S288c) (Baker's yeast).